A 263-amino-acid chain; its full sequence is 5'-nucleotidase SurE (263 aa).

The a divalent metal cation site is built by D21, D22, S52, and N105.

It belongs to the SurE nucleotidase family. Requires a divalent metal cation as cofactor.

The protein resides in the cytoplasm. The catalysed reaction is a ribonucleoside 5'-phosphate + H2O = a ribonucleoside + phosphate. Nucleotidase that shows phosphatase activity on nucleoside 5'-monophosphates. The polypeptide is 5'-nucleotidase SurE (Vibrio cholerae serotype O1 (strain ATCC 39541 / Classical Ogawa 395 / O395)).